The following is a 985-amino-acid chain: Bifunctional glutamine synthetase adenylyltransferase/adenylyl-removing enzyme (985 aa).

The interval 1 to 472 is adenylyl removase; that stretch reads MTSSAPGNAD…HYARLFEGDP (472 aa). An adenylyl transferase region spans residues 477-985; sequence SLPPVNYGAG…RRVFTSLLEE (509 aa).

This sequence belongs to the GlnE family. Mg(2+) serves as cofactor.

The enzyme catalyses [glutamine synthetase]-O(4)-(5'-adenylyl)-L-tyrosine + phosphate = [glutamine synthetase]-L-tyrosine + ADP. It catalyses the reaction [glutamine synthetase]-L-tyrosine + ATP = [glutamine synthetase]-O(4)-(5'-adenylyl)-L-tyrosine + diphosphate. Involved in the regulation of glutamine synthetase GlnA, a key enzyme in the process to assimilate ammonia. When cellular nitrogen levels are high, the C-terminal adenylyl transferase (AT) inactivates GlnA by covalent transfer of an adenylyl group from ATP to specific tyrosine residue of GlnA, thus reducing its activity. Conversely, when nitrogen levels are low, the N-terminal adenylyl removase (AR) activates GlnA by removing the adenylyl group by phosphorolysis, increasing its activity. The regulatory region of GlnE binds the signal transduction protein PII (GlnB) which indicates the nitrogen status of the cell. This chain is Bifunctional glutamine synthetase adenylyltransferase/adenylyl-removing enzyme, found in Bradyrhizobium sp. (strain BTAi1 / ATCC BAA-1182).